Here is a 472-residue protein sequence, read N- to C-terminus: 3-isopropylmalate dehydratase large subunit (472 aa).

Residues Cys-347, Cys-407, and Cys-410 each contribute to the [4Fe-4S] cluster site.

Belongs to the aconitase/IPM isomerase family. LeuC type 1 subfamily. In terms of assembly, heterodimer of LeuC and LeuD. It depends on [4Fe-4S] cluster as a cofactor.

The enzyme catalyses (2R,3S)-3-isopropylmalate = (2S)-2-isopropylmalate. Its pathway is amino-acid biosynthesis; L-leucine biosynthesis; L-leucine from 3-methyl-2-oxobutanoate: step 2/4. Its function is as follows. Catalyzes the isomerization between 2-isopropylmalate and 3-isopropylmalate, via the formation of 2-isopropylmaleate. The polypeptide is 3-isopropylmalate dehydratase large subunit (Synechococcus sp. (strain WH7803)).